The primary structure comprises 236 residues: MGHESPTIEFLGLTFSQSNLLMVTVASVIVFLIAVLCTRTLAMKPSGAQNFIEWVLDFVKGLVNSNMDWKTGGRFLTLGVTLLMYIFVSNMLGLPFAIVIDHNLWWKSPTADPAITLTLAVMVVVLSHYYGIKMRGFSAYTKDYFKPMAFLFPLKIIEEFANTLTLGLRLYGNIYAGEILLSLLAGLATTGFLGTIGAAIPMLLWQGFSIFVGAIQAFIFTMLTMVYLSHKVSSDH.

Transmembrane regions (helical) follow at residues 18–38 (SNLL…VLCT), 80–100 (VTLL…AIVI), 112–132 (DPAI…YYGI), 179–199 (ILLS…IGAA), and 200–220 (IPML…AFIF).

Belongs to the ATPase A chain family. F-type ATPases have 2 components, CF(1) - the catalytic core - and CF(0) - the membrane proton channel. CF(1) has five subunits: alpha(3), beta(3), gamma(1), delta(1), epsilon(1). CF(0) has three main subunits: a(1), b(2) and c(9-12). The alpha and beta chains form an alternating ring which encloses part of the gamma chain. CF(1) is attached to CF(0) by a central stalk formed by the gamma and epsilon chains, while a peripheral stalk is formed by the delta and b chains.

It localises to the cell membrane. Key component of the proton channel; it plays a direct role in the translocation of protons across the membrane. This chain is ATP synthase subunit a, found in Priestia megaterium (strain ATCC 12872 / QMB1551) (Bacillus megaterium).